Reading from the N-terminus, the 752-residue chain is Complement C2 (752 aa).

A signal peptide spans 1–20; it reads MGPLMVLFCLLFLYPGLADS. 3 consecutive Sushi domains span residues 22-86, 87-146, and 149-206; these read PSCP…VCKP, VRCP…VCDN, and GHCP…ICRQ. 6 cysteine pairs are disulfide-bonded: Cys24–Cys64, Cys51–Cys84, Cys89–Cys131, Cys117–Cys144, Cys151–Cys191, and Cys177–Cys204. The N-linked (GlcNAc...) asparagine glycan is linked to Asn29. An N-linked (GlcNAc...) asparagine glycan is attached at Asn112. A VWFA domain is found at 254–452; the sequence is NLYLLLDCSQ…KALHQVFEHM (199 aa). Residues 260–264 carry the MIDAS-like motif motif; that stretch reads DCSQS. Positions 262 and 264 each coordinate Mg(2+). Mn(2+) contacts are provided by Ser262 and Ser264. Residues Asn290 and Asn333 are each glycosylated (N-linked (GlcNAc...) asparagine). Mg(2+) is bound at residue Thr337. Position 337 (Thr337) interacts with Mn(2+). 3 disulfides stabilise this stretch: Cys463–Cys581, Cys492–Cys508, and Cys584–Cys600. The 281-residue stretch at 464–744 folds into the Peptidase S1 domain; sequence GVGNMSANAS…MQPWLRQHLG (281 aa). Asn467 and Asn471 each carry an N-linked (GlcNAc...) asparagine glycan. Residues His507 and Asp561 each act as charge relay system in the active site. An N-linked (GlcNAc...) asparagine glycan is attached at Asn621. 2 disulfides stabilise this stretch: Cys638–Cys665 and Cys675–Cys705. Residue Asn651 is glycosylated (N-linked (GlcNAc...) (complex) asparagine). Catalysis depends on Ser679, which acts as the Charge relay system.

This sequence belongs to the peptidase S1 family. As to quaternary structure, serine protease component of the C3 convertase, also named C4bC2b, composed of the serine protease complement C2b and complement C4b. Serine protease component of the C5 convertase, also named C4bC2bC3b, composed of the serine protease complement C2b, complement C3b, as well as complement C4b. (Microbial infection) Interacts with Schistosoma haematobium TOR (via N-terminal extracellular domain). This results in inhibition of the classical and lectin pathway of complement activation, probably due to interference with binding of C2a to C4b such that C3 convertase cannot be formed. This infers resistance to complement-mediated cell lysis, allowing parasite survival and infection. Requires Mg(2+) as cofactor. Mn(2+) is required as a cofactor. In terms of processing, cleaved and activated by different proteases depending on the complement pathway to generate complement C2a and serine protease complement C2b chains. Cleaved and activated by C1S following activation by the classical complement system. Cleaved and activated by MASP2 following activation by the lectin complement system. Cleaved and activated by GZMK following activation by the GZMK complement system.

Its subcellular location is the secreted. It is found in the cell surface. The enzyme catalyses Selective cleavage of Arg-|-Ser bond in complement component C3 alpha-chain to form C3a and C3b, and Arg-|-Xaa bond in complement component C5 alpha-chain to form C5a and C5b.. Functionally, precursor of the catalytic component of the C3 and C5 convertase complexes, which are part of the complement pathway, a cascade of proteins that leads to phagocytosis and breakdown of pathogens and signaling that strengthens the adaptive immune system. Component C2 is part of the classical, lectin and GZMK complement systems. Its function is as follows. Catalytic component of the complement C3 and C5 convertase complexes. Following complement activation, recruited to the surface of pathogens by complement C4b opsonin to form the C3 convertase, or C3b and C4b opsonins to form the C5 convertase. As part of the C3 convertase, cleaves and activate C3 into C3a anaphylatoxin and C3b opsonin, the next components of the complement pathways. As part of the C5 convertase, cleaves and activate C5 into C5a anaphylatoxin and C5b component of the membrane attack complex. The polypeptide is Complement C2 (Homo sapiens (Human)).